The sequence spans 185 residues: Elongation factor P (185 aa).

This sequence belongs to the elongation factor P family.

Its subcellular location is the cytoplasm. It functions in the pathway protein biosynthesis; polypeptide chain elongation. Functionally, involved in peptide bond synthesis. Stimulates efficient translation and peptide-bond synthesis on native or reconstituted 70S ribosomes in vitro. Probably functions indirectly by altering the affinity of the ribosome for aminoacyl-tRNA, thus increasing their reactivity as acceptors for peptidyl transferase. This is Elongation factor P from Rippkaea orientalis (strain PCC 8801 / RF-1) (Cyanothece sp. (strain PCC 8801)).